The chain runs to 249 residues: tRNA pseudouridine synthase A (249 aa).

Asp-52 serves as the catalytic Nucleophile. Residue Tyr-111 participates in substrate binding.

The protein belongs to the tRNA pseudouridine synthase TruA family. Homodimer.

It catalyses the reaction uridine(38/39/40) in tRNA = pseudouridine(38/39/40) in tRNA. Functionally, formation of pseudouridine at positions 38, 39 and 40 in the anticodon stem and loop of transfer RNAs. The chain is tRNA pseudouridine synthase A from Brachyspira hyodysenteriae (strain ATCC 49526 / WA1).